Here is an 86-residue protein sequence, read N- to C-terminus: Actinorhodin polyketide synthase acyl carrier protein (86 aa).

In terms of domain architecture, Carrier spans 4–82 (LLTTDDLRRA…ELLDLINGAL (79 aa)). Ser-42 carries the O-(pantetheine 4'-phosphoryl)serine modification.

In terms of processing, 4'-phosphopantetheine is transferred from CoA to a specific serine of the apo-ACP-like protein.

Its pathway is antibiotic biosynthesis; actinorhodin biosynthesis. Functionally, acyl carrier protein. The chain is Actinorhodin polyketide synthase acyl carrier protein from Streptomyces coelicolor (strain ATCC BAA-471 / A3(2) / M145).